Consider the following 503-residue polypeptide: SusD-like protein P38 (503 aa).

A signal peptide spans 1 to 21 (MKKFKNISITFLILISLGVLN).

Belongs to the SusD family.

It is found in the cell outer membrane. Polysaccharide-binding protein probably involved in ulvan degradation. Ulvan is the main polysaccharide component of the Ulvales (green seaweed) cell wall. It is composed of disaccharide building blocks comprising 3-sulfated rhamnose (Rha3S) linked to D-glucuronic acid (GlcA), L-iduronic acid (IduA), or D-xylose (Xyl). The SusD-like protein may mediate ulvan oligomer-binding before transport in the periplasm for further degradation. This Formosa agariphila (strain DSM 15362 / KCTC 12365 / LMG 23005 / KMM 3901 / M-2Alg 35-1) protein is SusD-like protein P38.